Here is a 68-residue protein sequence, read N- to C-terminus: Beta-defensin 1 (68 aa).

The first 21 residues, 1–21 (MRTSYLLLFTLCLLLSEIASG), serve as a signal peptide directing secretion. A propeptide spanning residues 22–32 (GNFLTGLGHRS) is cleaved from the precursor. Cystine bridges form between Cys37/Cys66, Cys44/Cys59, and Cys49/Cys67.

Belongs to the beta-defensin family. Monomer. Homodimer.

The protein resides in the secreted. The protein localises to the membrane. Has bactericidal activity. May act as a ligand for C-C chemokine receptor CCR6. Positively regulates the sperm motility and bactericidal activity in a CCR6-dependent manner. Binds to CCR6 and triggers Ca2+ mobilization in the sperm which is important for its motility. This chain is Beta-defensin 1 (DEFB1), found in Gorilla gorilla gorilla (Western lowland gorilla).